The following is a 66-amino-acid chain: ATP synthase F(0) complex subunit 8 (66 aa).

The chain crosses the membrane as a helical span at residues 8-24 (IWLLAVVIVLTTLMIFL). N6-acetyllysine; alternate is present on Lys-54. Lys-54 is modified (N6-succinyllysine; alternate). Lys-57 bears the N6-acetyllysine mark.

It belongs to the ATPase protein 8 family. Component of the ATP synthase complex composed at least of ATP5F1A/subunit alpha, ATP5F1B/subunit beta, ATP5MC1/subunit c (homooctomer), MT-ATP6/subunit a, MT-ATP8/subunit 8, ATP5ME/subunit e, ATP5MF/subunit f, ATP5MG/subunit g, ATP5MK/subunit k, ATP5MJ/subunit j, ATP5F1C/subunit gamma, ATP5F1D/subunit delta, ATP5F1E/subunit epsilon, ATP5PF/subunit F6, ATP5PB/subunit b, ATP5PD/subunit d, ATP5PO/subunit OSCP. ATP synthase complex consists of a soluble F(1) head domain (subunits alpha(3) and beta(3)) - the catalytic core - and a membrane F(0) domain - the membrane proton channel (subunits c, a, 8, e, f, g, k and j). These two domains are linked by a central stalk (subunits gamma, delta, and epsilon) rotating inside the F1 region and a stationary peripheral stalk (subunits F6, b, d, and OSCP). Interacts with PRICKLE3.

It localises to the mitochondrion membrane. In terms of biological role, subunit 8, of the mitochondrial membrane ATP synthase complex (F(1)F(0) ATP synthase or Complex V) that produces ATP from ADP in the presence of a proton gradient across the membrane which is generated by electron transport complexes of the respiratory chain. ATP synthase complex consist of a soluble F(1) head domain - the catalytic core - and a membrane F(1) domain - the membrane proton channel. These two domains are linked by a central stalk rotating inside the F(1) region and a stationary peripheral stalk. During catalysis, ATP synthesis in the catalytic domain of F(1) is coupled via a rotary mechanism of the central stalk subunits to proton translocation. In vivo, can only synthesize ATP although its ATP hydrolase activity can be activated artificially in vitro. Part of the complex F(0) domain. This Loxodonta africana (African elephant) protein is ATP synthase F(0) complex subunit 8.